A 187-amino-acid chain; its full sequence is Chlorobenzene dioxygenase subunit beta (187 aa).

This sequence belongs to the bacterial ring-hydroxylating dioxygenase beta subunit family. As to quaternary structure, this dioxygenase system consists of four proteins: the two subunits of the oxygenase component (TecA1 and TecA2), a ferredoxin (TecA3) and a ferredoxin reductase (TecA4).

It carries out the reaction chlorobenzene + NADH + O2 + H(+) = (1R,2R)-3-chlorocyclohexa-3,5-diene-1,2-diol + NAD(+). Its pathway is aromatic compound metabolism. Its function is as follows. Part of the oxygenase component of the chlorobenzene dioxygenase system that catalyzes the dihydroxylation of a range of aromatic compounds, including chlorinated benzenes and toluenes, and dinuclear aromatics such as biphenyl and dibenzo-p-dioxin. The beta subunit is not directly involved in the control of substrate specificity. The polypeptide is Chlorobenzene dioxygenase subunit beta (Cupriavidus sp. (strain PS12)).